Reading from the N-terminus, the 447-residue chain is Kynurenine 3-monooxygenase (447 aa).

The protein belongs to the aromatic-ring hydroxylase family. KMO subfamily. The cofactor is FAD.

It catalyses the reaction L-kynurenine + NADPH + O2 + H(+) = 3-hydroxy-L-kynurenine + NADP(+) + H2O. It participates in cofactor biosynthesis; NAD(+) biosynthesis; quinolinate from L-kynurenine: step 1/3. Functionally, catalyzes the hydroxylation of L-kynurenine (L-Kyn) to form 3-hydroxy-L-kynurenine (L-3OHKyn). Required for synthesis of quinolinic acid. In Flavobacterium psychrophilum (strain ATCC 49511 / DSM 21280 / CIP 103535 / JIP02/86), this protein is Kynurenine 3-monooxygenase.